Here is a 158-residue protein sequence, read N- to C-terminus: NAD(P)H-quinone oxidoreductase subunit J, chloroplastic (158 aa).

This sequence belongs to the complex I 30 kDa subunit family. In terms of assembly, NDH is composed of at least 16 different subunits, 5 of which are encoded in the nucleus.

The protein localises to the plastid. The protein resides in the chloroplast thylakoid membrane. The catalysed reaction is a plastoquinone + NADH + (n+1) H(+)(in) = a plastoquinol + NAD(+) + n H(+)(out). It carries out the reaction a plastoquinone + NADPH + (n+1) H(+)(in) = a plastoquinol + NADP(+) + n H(+)(out). Functionally, NDH shuttles electrons from NAD(P)H:plastoquinone, via FMN and iron-sulfur (Fe-S) centers, to quinones in the photosynthetic chain and possibly in a chloroplast respiratory chain. The immediate electron acceptor for the enzyme in this species is believed to be plastoquinone. Couples the redox reaction to proton translocation, and thus conserves the redox energy in a proton gradient. The sequence is that of NAD(P)H-quinone oxidoreductase subunit J, chloroplastic from Cucumis sativus (Cucumber).